Consider the following 191-residue polypeptide: Endoribonuclease YbeY (191 aa).

H122, H126, and H132 together coordinate Zn(2+). The segment at 164-191 (QPKPSGPKAFPDAAERAELDKEVPGGGI) is disordered. Residues 176–191 (AAERAELDKEVPGGGI) are compositionally biased toward basic and acidic residues.

It belongs to the endoribonuclease YbeY family. The cofactor is Zn(2+).

It is found in the cytoplasm. Functionally, single strand-specific metallo-endoribonuclease involved in late-stage 70S ribosome quality control and in maturation of the 3' terminus of the 16S rRNA. The polypeptide is Endoribonuclease YbeY (Corynebacterium aurimucosum (strain ATCC 700975 / DSM 44827 / CIP 107346 / CN-1) (Corynebacterium nigricans)).